The primary structure comprises 501 residues: Dye-decolorizing peroxidase (501 aa).

A signal peptide spans 1 to 21 (MRLSPSFLSLALVIFVGEVVA). Residues 22–60 (RNVVARASNPASVTGTRKVSLLKNVAGLPAVPTAQQVAV) constitute a propeptide that is removed on maturation. Catalysis depends on aspartate 228, which acts as the Proton acceptor. Asparagine 352 carries N-linked (GlcNAc...) asparagine glycosylation. Residue histidine 367 coordinates heme. Asparagine 403 is a glycosylation site (N-linked (GlcNAc...) asparagine).

This sequence belongs to the DyP-type peroxidase family. Requires heme b as cofactor.

It is found in the secreted. It carries out the reaction Reactive Blue 5 + 2 H2O2 = 2,2'-disulfonyl azobenzene + 3-[(4-amino-6-chloro-1,3,5-triazin-2-yl)amino]benzenesulfonate + phthalate + 2 H2O + 2 H(+). The enzyme catalyses 2 a phenolic donor + H2O2 = 2 a phenolic radical donor + 2 H2O. In terms of biological role, manganese-independent peroxidase that is able to convert a large number of compounds, but its physiological substrate is not known. In addition to classic peroxidase substrates (e.g. 2,6-dimethoxyphenol), oxidizes dyes such as Reactive Blue 5 and Reactive Black 5. The chain is Dye-decolorizing peroxidase from Exidia glandulosa (Black witch's butter).